A 269-amino-acid chain; its full sequence is Eukaryotic translation initiation factor 3 subunit G-1 (269 aa).

Residues alanine 188–proline 266 form the RRM domain.

The protein belongs to the eIF-3 subunit G family. In terms of assembly, component of the eukaryotic translation initiation factor 3 (eIF-3) complex. The eIF-3 complex interacts with pix.

The protein resides in the cytoplasm. Functionally, RNA-binding component of the eukaryotic translation initiation factor 3 (eIF-3) complex, which is involved in protein synthesis of a specialized repertoire of mRNAs and, together with other initiation factors, stimulates binding of mRNA and methionyl-tRNAi to the 40S ribosome. The eIF-3 complex specifically targets and initiates translation of a subset of mRNAs involved in cell proliferation. This subunit can bind 18S rRNA. In Drosophila grimshawi (Hawaiian fruit fly), this protein is Eukaryotic translation initiation factor 3 subunit G-1.